Here is an 899-residue protein sequence, read N- to C-terminus: Translation initiation factor IF-2 (899 aa).

Disordered stretches follow at residues 116–135 (AKAR…ARLQ), 170–189 (RGGG…EQKK), and 262–306 (DREI…ANKH). The tr-type G domain occupies 399–568 (TRPPVVTIMG…LIQSELMELK (170 aa)). Residues 408–415 (GHVDHGKT) are G1. Residue 408–415 (GHVDHGKT) participates in GTP binding. A G2 region spans residues 433–437 (GITQH). The interval 454 to 457 (DTPG) is G3. GTP is bound by residues 454 to 458 (DTPGH) and 508 to 511 (NKMD). The interval 508 to 511 (NKMD) is G4. Residues 544 to 546 (SAH) form a G5 region.

This sequence belongs to the TRAFAC class translation factor GTPase superfamily. Classic translation factor GTPase family. IF-2 subfamily.

Its subcellular location is the cytoplasm. One of the essential components for the initiation of protein synthesis. Protects formylmethionyl-tRNA from spontaneous hydrolysis and promotes its binding to the 30S ribosomal subunits. Also involved in the hydrolysis of GTP during the formation of the 70S ribosomal complex. The sequence is that of Translation initiation factor IF-2 from Acinetobacter baumannii (strain AB307-0294).